We begin with the raw amino-acid sequence, 877 residues long: AP-5 complex subunit beta-1 (877 aa).

As to quaternary structure, probably part of the adaptor protein complex 5 (AP-5), a tetramer composed of AP5B1, AP5M1, AP5S1 and AP5Z1. Interacts with ZFYVE26 and SPG11.

Its function is as follows. As part of AP-5, a probable fifth adaptor protein complex, it may be involved in endosomal transport. The sequence is that of AP-5 complex subunit beta-1 (AP5B1) from Bos taurus (Bovine).